The following is a 398-amino-acid chain: 1-deoxy-D-xylulose 5-phosphate reductoisomerase (398 aa).

Thr10, Gly11, Ser12, Ile13, Gly36, Asn38, and Asn124 together coordinate NADPH. Residue Lys125 participates in 1-deoxy-D-xylulose 5-phosphate binding. Glu126 serves as a coordination point for NADPH. Residue Asp150 participates in Mn(2+) binding. 1-deoxy-D-xylulose 5-phosphate-binding residues include Ser151, Glu152, Ser186, and His209. Glu152 is a binding site for Mn(2+). Gly215 is an NADPH binding site. Residues Ser222, Asn227, Lys228, and Glu231 each contribute to the 1-deoxy-D-xylulose 5-phosphate site. Residue Glu231 participates in Mn(2+) binding.

Belongs to the DXR family. In terms of assembly, homodimer. The cofactor is Mg(2+). Requires Mn(2+) as cofactor.

The catalysed reaction is 2-C-methyl-D-erythritol 4-phosphate + NADP(+) = 1-deoxy-D-xylulose 5-phosphate + NADPH + H(+). Its pathway is isoprenoid biosynthesis; isopentenyl diphosphate biosynthesis via DXP pathway; isopentenyl diphosphate from 1-deoxy-D-xylulose 5-phosphate: step 1/6. Its function is as follows. Catalyzes the NADPH-dependent rearrangement and reduction of 1-deoxy-D-xylulose-5-phosphate (DXP) to 2-C-methyl-D-erythritol 4-phosphate (MEP). The chain is 1-deoxy-D-xylulose 5-phosphate reductoisomerase from Pectobacterium atrosepticum (strain SCRI 1043 / ATCC BAA-672) (Erwinia carotovora subsp. atroseptica).